The chain runs to 527 residues: (3S)-3-amino-3-(3-chloro-4-hydroxyphenyl)propanoyl-[peptidyl-carrier protein SgcC2] monooxygenase (527 aa).

The segment covering 1–10 has biased composition (basic and acidic residues); that stretch reads MPHGAEREAS. Residues 1–22 are disordered; that stretch reads MPHGAEREASPAEESAGTRPLT. Residues 161-163, 167-170, and Thr202 contribute to the FAD site; these read HAF and PVDR.

It belongs to the FADH(2)-utilizing monooxygenase family. Homotetramer.

The enzyme catalyses (3S)-3-amino-3-(3-chloro-4-hydroxyphenyl)propanoyl-[SgcC2 peptidyl-carrier protein] + FADH2 + O2 = (3S)-3-amino-3-(3-chloro-4,5-dihydroxyphenyl)propanoyl-[SgcC2 peptidyl-carrier protein] + FAD + H2O + H(+). The protein operates within antibiotic biosynthesis. The SgcE6-SgcC hydroxylation activity decreases in the presence of excess FAD. Its function is as follows. Oxygenase component of a two-component system involved in the biosynthesis of the enediyne antitumor antibiotic C-1027. Uses FADH(2) supplied by SgcE6 to catalyze the C-5 hydroxylation of (S)-3-chloro-beta-tyrosyl-S-SgcC2. Can also efficiently catalyze the regioselective hydroxylation of other 3-substituted beta-tyrosyl-S-SgcC2 analogs, including the bromo-, iodo-, fluoro-, and methyl-substituted analogs, but does not accept 3-hydroxy-beta-tyrosyl-S-SgcC2 as a substrate. Is only active with SgcC2 (peptidyl carrier protein)-tethered substrates. The protein is (3S)-3-amino-3-(3-chloro-4-hydroxyphenyl)propanoyl-[peptidyl-carrier protein SgcC2] monooxygenase of Streptomyces globisporus.